The sequence spans 143 residues: uncharacterized protein (143 aa).

Positions 1–16 (MSRNRLFLVAGSLAVA) are cleaved as a signal peptide. Residues 114-134 (GAYVFLGPGFTPGSPSGGSGG) traverse the membrane as a helical segment.

It is found in the membrane. This is an uncharacterized protein from Mycobacterium tuberculosis (strain CDC 1551 / Oshkosh).